The sequence spans 303 residues: Phenoloxidase-activating factor 2 (303 aa).

The disordered stretch occupies residues 1–24; it reads PDRRPPEDPITPPPPTKEEQRAGC. A Peptidase S1 domain is found at 36-292; it reads IIGDKDGEAK…LRDWIDDKVA (257 aa). Intrachain disulfides connect C173–C247, C206–C227, and C237–C268.

Belongs to the peptidase S1 family. In terms of assembly, heterodimer.

It is found in the secreted. Functionally, binds and activates processed prophenoloxidases PPO1 and PPO2 and thus is involved in the activation of the prophenoloxidase cascade probably following the recognition of pathogen-derived products. Binds the A.niger cell wall component alpha-1,3-glucan, a fungal pathogen-associated molecular pattern (PAMP) that activates the host immune response. This is Phenoloxidase-activating factor 2 (LOC113510063) from Galleria mellonella (Greater wax moth).